Here is a 149-residue protein sequence, read N- to C-terminus: Hordoindoline-A (149 aa).

An N-terminal signal peptide occupies residues 1-19; it reads MKALFLMGLLALVASAAFA. A propeptide spanning residues 20–28 is cleaved from the precursor; the sequence is QYGEVVGSY. Positions 148–149 are cleaved as a propeptide — removed in mature form; sequence YW.

Post-translationally, five disulfide bonds are present. Found in endosperm and aleurone layer of developing kernels, but not in the embryo.

Its subcellular location is the membrane. It localises to the secreted. The protein localises to the extracellular space. In terms of biological role, acts as a membranotoxin, probably through its antibacterial and antifungal activities, contributing to the defense mechanism of the plant against predators. Forms monovalent cation-selective ion channels in membranes. Contributes to grain texture and hardness. The protein is Hordoindoline-A (HINA) of Hordeum vulgare (Barley).